The sequence spans 431 residues: Enolase (431 aa).

Glutamine 166 is a binding site for (2R)-2-phosphoglycerate. Glutamate 208 (proton donor) is an active-site residue. Mg(2+) is bound by residues aspartate 245, glutamate 288, and aspartate 315. 4 residues coordinate (2R)-2-phosphoglycerate: lysine 340, arginine 369, serine 370, and lysine 391. Residue lysine 340 is the Proton acceptor of the active site.

Belongs to the enolase family. It depends on Mg(2+) as a cofactor.

It localises to the cytoplasm. Its subcellular location is the secreted. The protein resides in the cell surface. The enzyme catalyses (2R)-2-phosphoglycerate = phosphoenolpyruvate + H2O. It functions in the pathway carbohydrate degradation; glycolysis; pyruvate from D-glyceraldehyde 3-phosphate: step 4/5. Its function is as follows. Catalyzes the reversible conversion of 2-phosphoglycerate (2-PG) into phosphoenolpyruvate (PEP). It is essential for the degradation of carbohydrates via glycolysis. This chain is Enolase, found in Clostridium botulinum (strain Eklund 17B / Type B).